Consider the following 263-residue polypeptide: 5'-nucleotidase SurE (263 aa).

A divalent metal cation contacts are provided by aspartate 8, aspartate 9, serine 43, and asparagine 96.

It belongs to the SurE nucleotidase family. A divalent metal cation is required as a cofactor.

The protein resides in the cytoplasm. The enzyme catalyses a ribonucleoside 5'-phosphate + H2O = a ribonucleoside + phosphate. Its function is as follows. Nucleotidase that shows phosphatase activity on nucleoside 5'-monophosphates. This Jannaschia sp. (strain CCS1) protein is 5'-nucleotidase SurE.